Consider the following 233-residue polypeptide: Sugar fermentation stimulation protein homolog (233 aa).

This sequence belongs to the SfsA family.

In Teredinibacter turnerae (strain ATCC 39867 / T7901), this protein is Sugar fermentation stimulation protein homolog.